The following is a 630-amino-acid chain: Probable potassium transport system protein Kup 2 (630 aa).

The next 12 helical transmembrane spans lie at 14 to 34, 56 to 76, 108 to 128, 145 to 165, 176 to 196, 214 to 234, 255 to 275, 293 to 313, 352 to 372, 375 to 395, 402 to 422, and 427 to 447; these read ATGFGALTLGSIGVVFGDIGT, VIVLGVLSLILWSLLIVVTAK, VPLLVLGVIGASMFIGDSMIT, PALQHYVVPLTVGILVALFAF, AFGPVMVLWFSTLAVLGLLHI, FMLSHGVIALVTIGAVFLAVT, WLFFVLPSLLLNYFGQGAMVL, LLVPMILLATAATVIASQAVI, MLLLAGVLLLVLLFHSSSALA, YGIAVSTTMVVDGVMGFVVVW, PAAAAALIIPFVAVDAIFFSA, and LMEGAWVPLLFGFLMAMLVWT.

Belongs to the HAK/KUP transporter (TC 2.A.72) family.

Its subcellular location is the cell inner membrane. The enzyme catalyses K(+)(in) + H(+)(in) = K(+)(out) + H(+)(out). Transport of potassium into the cell. Likely operates as a K(+):H(+) symporter. In Rhodopseudomonas palustris (strain BisA53), this protein is Probable potassium transport system protein Kup 2.